The following is a 476-amino-acid chain: Ribulose bisphosphate carboxylase large chain (476 aa).

The propeptide occupies 1-2; that stretch reads MS. At Pro3 the chain carries N-acetylproline. At Lys14 the chain carries N6,N6,N6-trimethyllysine. Residues Asn123 and Thr173 each coordinate substrate. Lys175 acts as the Proton acceptor in catalysis. Lys177 serves as a coordination point for substrate. Positions 201, 203, and 204 each coordinate Mg(2+). Lys201 bears the N6-carboxylysine mark. His294 serves as the catalytic Proton acceptor. The substrate site is built by Arg295, His327, and Ser379.

It belongs to the RuBisCO large chain family. Type I subfamily. In terms of assembly, heterohexadecamer of 8 large chains and 8 small chains; disulfide-linked. The disulfide link is formed within the large subunit homodimers. Requires Mg(2+) as cofactor. Post-translationally, the disulfide bond which can form in the large chain dimeric partners within the hexadecamer appears to be associated with oxidative stress and protein turnover.

The protein localises to the plastid. It localises to the chloroplast. It carries out the reaction 2 (2R)-3-phosphoglycerate + 2 H(+) = D-ribulose 1,5-bisphosphate + CO2 + H2O. The enzyme catalyses D-ribulose 1,5-bisphosphate + O2 = 2-phosphoglycolate + (2R)-3-phosphoglycerate + 2 H(+). Functionally, ruBisCO catalyzes two reactions: the carboxylation of D-ribulose 1,5-bisphosphate, the primary event in carbon dioxide fixation, as well as the oxidative fragmentation of the pentose substrate in the photorespiration process. Both reactions occur simultaneously and in competition at the same active site. This chain is Ribulose bisphosphate carboxylase large chain, found in Liriodendron tulipifera (Tuliptree).